A 369-amino-acid polypeptide reads, in one-letter code: Molybdenum import ATP-binding protein ModC (369 aa).

Positions 7–243 (PGQAGIHARF…LDLPMAMTDD (237 aa)) constitute an ABC transporter domain. An ATP-binding site is contributed by 41–48 (GQSGSGKT). Residues 304-369 (EGSILNVLAV…AQIKAVSLLA (66 aa)) enclose the Mop domain.

Belongs to the ABC transporter superfamily. Molybdate importer (TC 3.A.1.8) family. As to quaternary structure, the complex is composed of two ATP-binding proteins (ModC), two transmembrane proteins (ModB) and a solute-binding protein (ModA).

Its subcellular location is the cell inner membrane. The enzyme catalyses molybdate(out) + ATP + H2O = molybdate(in) + ADP + phosphate + H(+). In terms of biological role, part of the ABC transporter complex ModABC involved in molybdenum import. Responsible for energy coupling to the transport system. In Bordetella bronchiseptica (strain ATCC BAA-588 / NCTC 13252 / RB50) (Alcaligenes bronchisepticus), this protein is Molybdenum import ATP-binding protein ModC.